A 521-amino-acid polypeptide reads, in one-letter code: FAD-dependent monooxygenase mdpD (521 aa).

A disordered region spans residues 1–48 (MTHFPVNIASDKQEFDPERWAKTPTTESSVNGENGTAPTSGLPSRHPS). Residues 11–21 (DKQEFDPERWA) are compositionally biased toward basic and acidic residues. Positions 23–48 (TPTTESSVNGENGTAPTSGLPSRHPS) are enriched in polar residues. Val-94 and Arg-160 together coordinate FAD. Active-site residues include Arg-244 and Tyr-271. Residues Asp-369 and Gly-382 each contribute to the FAD site.

It belongs to the paxM FAD-dependent monooxygenase family. Requires FAD as cofactor.

Its pathway is secondary metabolite biosynthesis. Functionally, FAD-dependent monooxygenase; part of the gene cluster that mediates the biosynthesis of monodictyphenone, a prenyl xanthone derivative. The pathway begins with the synthesis of atrochrysone thioester by the polyketide synthase (PKS) mdpG. The atrochrysone carboxyl ACP thioesterase mdpF then breaks the thioester bond and releases the atrochrysone carboxylic acid from mdpG. The atrochrysone carboxylic acid is then converted to atrochrysone which is further transformed into emodin anthrone. The next step is performed by the anthrone oxygenase mdpH that catalyzes the oxidation of emodinanthrone to emodin. Emodin is further modified to yield monodictyphenone via several steps involving mdpB, mdpC mdpJ, mdpK and mdpL. These enzymes with xptA, xptB and xptC are also proposed to be involved in the synthesis of shamixanthone from emodin. Especially, direct reduction of emodin by the short chain dehydrogenase mdpC followed by dehydration catalyzed by the scytalone dehydratase-like protein mdpB gives loss of oxygen and formation of chrysophanol intermediate in two simple steps. The sequence is that of FAD-dependent monooxygenase mdpD from Emericella nidulans (strain FGSC A4 / ATCC 38163 / CBS 112.46 / NRRL 194 / M139) (Aspergillus nidulans).